We begin with the raw amino-acid sequence, 579 residues long: Amino acid transporter 1 (579 aa).

The Cytoplasmic portion of the chain corresponds to 1–83; sequence MSAKDYDFDI…KRGLSTRHMQ (83 aa). A helical membrane pass occupies residues 84 to 104; sequence LMSIGGAIGSGLYVGSGSALA. Residues 105–108 are Extracellular-facing; that stretch reads DGGP. A helical membrane pass occupies residues 109–129; it reads ASVIINYILIGIMMFFVIYAL. The Cytoplasmic segment spans residues 130–161; the sequence is GEMAVAYPVAGSFNTYATRFIDPAWGFAVSWN. Residues 162-184 form a helical membrane-spanning segment; that stretch reads YFFNYFVTFPFELTTCAITFTFW. Topologically, residues 185-186 are extracellular; it reads TD. The helical transmembrane segment at 187–207 threads the bilayer; sequence VNCAVWISIFLVVVIGINLFG. Residues 208 to 215 are Cytoplasmic-facing; it reads VRVFGEVE. The chain crosses the membrane as a helical span at residues 216–236; that stretch reads FVLALIKVVATVGFIILAIII. The Extracellular portion of the chain corresponds to 237–265; the sequence is NCGGVPTDHRGYIGGSIIKQKPFRHGFKG. Residues 266-286 form a helical membrane-spanning segment; sequence FCSVYTTAAFSFSGTEIVGLA. Residues 287–303 lie on the Cytoplasmic side of the membrane; that stretch reads AAEVGDPRKTLPGAVKQ. A helical membrane pass occupies residues 304-324; sequence VFWRVAIFYIVSLILIGLLIS. The Extracellular portion of the chain corresponds to 325 to 347; it reads PDDPKLMGNGSASVSPFVLAIQE. The helical transmembrane segment at 348 to 368 threads the bilayer; that stretch reads ANIKGLPSVFNAVIIISVISV. Topologically, residues 369 to 401 are cytoplasmic; sequence TNSSTYTAGRTLHGMANLKQAPAFFKYTDRLGR. The helical transmembrane segment at 402–422 threads the bilayer; sequence PLIAMIVVLSFGFFAYINEAN. The Extracellular portion of the chain corresponds to 423–431; the sequence is NNGNDISDT. The chain crosses the membrane as a helical span at residues 432–452; it reads VFDWLLAISGLSNFFTWGSIC. Residues 453–471 are Cytoplasmic-facing; that stretch reads LSHIMFRLAFKKQGHSLKE. The helical transmembrane segment at 472-492 threads the bilayer; the sequence is LGFVSPMGIWGSVIGLGFNIL. Residues 493–513 lie on the Extracellular side of the membrane; sequence CLMAEFYVSLFPIGGSPNAND. A helical transmembrane segment spans residues 514–534; that stretch reads FFQGYLAACITLVFFIGYKIY. The Cytoplasmic segment spans residues 535–579; it reads DRSHIPSLDKLDITTGLKTYEYEETKDSSDTGRFRFFKKIINTVC.

This sequence belongs to the amino acid-polyamine-organocation (APC) superfamily.

It localises to the golgi apparatus membrane. It is found in the cell membrane. Probable amino acid transporter that may play a role in function in microtubule organization since it causes microtubule defects when overexpressed. In Schizosaccharomyces pombe (strain 972 / ATCC 24843) (Fission yeast), this protein is Amino acid transporter 1 (aat1).